We begin with the raw amino-acid sequence, 343 residues long: N-acetyl-gamma-glutamyl-phosphate reductase (343 aa).

Cys-147 is an active-site residue.

This sequence belongs to the NAGSA dehydrogenase family. Type 1 subfamily.

Its subcellular location is the cytoplasm. The enzyme catalyses N-acetyl-L-glutamate 5-semialdehyde + phosphate + NADP(+) = N-acetyl-L-glutamyl 5-phosphate + NADPH + H(+). It participates in amino-acid biosynthesis; L-arginine biosynthesis; N(2)-acetyl-L-ornithine from L-glutamate: step 3/4. Its function is as follows. Catalyzes the NADPH-dependent reduction of N-acetyl-5-glutamyl phosphate to yield N-acetyl-L-glutamate 5-semialdehyde. The sequence is that of N-acetyl-gamma-glutamyl-phosphate reductase from Staphylococcus saprophyticus subsp. saprophyticus (strain ATCC 15305 / DSM 20229 / NCIMB 8711 / NCTC 7292 / S-41).